The following is a 158-amino-acid chain: Curculin-2 (158 aa).

Residues 1-22 (MAAKFLLTILVTFAAVASLGMA) form the signal peptide. A Bulb-type lectin domain is found at 23–131 (DSVLLSGQTL…VLWPLGLNGC (109 aa)). Cysteines 51 and 74 form a disulfide. The N-linked (GlcNAc...) asparagine glycan is linked to Asn103. The propeptide occupies 136–158 (GEITVAKDSTEPQHEDIKMVINN).

In terms of assembly, heterodimer with curculin-1; Disulfide-linked.

Functionally, taste-modifying protein; sweet-tasting. After curculin, water elicits a sweet taste, and sour substances induce a stronger sense of sweetness. This chain is Curculin-2, found in Molineria latifolia (Lumbah).